We begin with the raw amino-acid sequence, 267 residues long: 4-hydroxy-tetrahydrodipicolinate reductase (267 aa).

NAD(+) contacts are provided by residues Gly-12 to Met-17, Asp-38, Gly-100 to Thr-102, and Ala-126 to Phe-129. His-156 serves as the catalytic Proton donor/acceptor. Residue His-157 coordinates (S)-2,3,4,5-tetrahydrodipicolinate. Lys-160 serves as the catalytic Proton donor. Gly-166–Thr-167 serves as a coordination point for (S)-2,3,4,5-tetrahydrodipicolinate.

It belongs to the DapB family.

It localises to the cytoplasm. It carries out the reaction (S)-2,3,4,5-tetrahydrodipicolinate + NAD(+) + H2O = (2S,4S)-4-hydroxy-2,3,4,5-tetrahydrodipicolinate + NADH + H(+). It catalyses the reaction (S)-2,3,4,5-tetrahydrodipicolinate + NADP(+) + H2O = (2S,4S)-4-hydroxy-2,3,4,5-tetrahydrodipicolinate + NADPH + H(+). It functions in the pathway amino-acid biosynthesis; L-lysine biosynthesis via DAP pathway; (S)-tetrahydrodipicolinate from L-aspartate: step 4/4. In terms of biological role, catalyzes the conversion of 4-hydroxy-tetrahydrodipicolinate (HTPA) to tetrahydrodipicolinate. The sequence is that of 4-hydroxy-tetrahydrodipicolinate reductase from Bacillus pumilus (strain SAFR-032).